A 333-amino-acid chain; its full sequence is Glutamyl-tRNA reductase (333 aa).

Substrate contacts are provided by residues 60–63 (TCHR), Ser110, 115–117 (ETE), and Gln121. Cys61 (nucleophile) is an active-site residue. 189–194 (GYSEIN) is a binding site for NADP(+).

Belongs to the glutamyl-tRNA reductase family. In terms of assembly, homodimer.

It carries out the reaction (S)-4-amino-5-oxopentanoate + tRNA(Glu) + NADP(+) = L-glutamyl-tRNA(Glu) + NADPH + H(+). It participates in porphyrin-containing compound metabolism; protoporphyrin-IX biosynthesis; 5-aminolevulinate from L-glutamyl-tRNA(Glu): step 1/2. Functionally, catalyzes the NADPH-dependent reduction of glutamyl-tRNA(Glu) to glutamate 1-semialdehyde (GSA). The protein is Glutamyl-tRNA reductase of Chlamydia muridarum (strain MoPn / Nigg).